The sequence spans 738 residues: uncharacterized protein (738 aa).

The N-terminal stretch at 1–27 is a signal peptide; the sequence is MKKLLTSLMLSTASFMLLLTVSNKAYA. Transmembrane regions (helical) follow at residues 612 to 632 and 712 to 732; these read TFHT…ILNS and ITYA…TVTI.

It localises to the membrane. This is an uncharacterized protein from Mycoplasma (Bacteriophage L2).